Consider the following 493-residue polypeptide: Ketol-acid reductoisomerase (NADP(+)) (493 aa).

Positions 17 to 208 constitute a KARI N-terminal Rossmann domain; sequence LGKCRFMKRE…GGDRAGVLES (192 aa). NADP(+)-binding positions include 45–48, arginine 68, arginine 76, serine 78, and 108–110; these read CGAQ and DKQ. The active site involves histidine 132. Glycine 158 contacts NADP(+). 2 consecutive KARI C-terminal knotted domains span residues 209-353 and 354-486; these read SFIA…SEQE and YYDK…MTDM. Positions 217, 221, 389, and 393 each coordinate Mg(2+). Serine 414 lines the substrate pocket.

Belongs to the ketol-acid reductoisomerase family. Mg(2+) is required as a cofactor.

It catalyses the reaction (2R)-2,3-dihydroxy-3-methylbutanoate + NADP(+) = (2S)-2-acetolactate + NADPH + H(+). It carries out the reaction (2R,3R)-2,3-dihydroxy-3-methylpentanoate + NADP(+) = (S)-2-ethyl-2-hydroxy-3-oxobutanoate + NADPH + H(+). The protein operates within amino-acid biosynthesis; L-isoleucine biosynthesis; L-isoleucine from 2-oxobutanoate: step 2/4. Its pathway is amino-acid biosynthesis; L-valine biosynthesis; L-valine from pyruvate: step 2/4. Functionally, involved in the biosynthesis of branched-chain amino acids (BCAA). Catalyzes an alkyl-migration followed by a ketol-acid reduction of (S)-2-acetolactate (S2AL) to yield (R)-2,3-dihydroxy-isovalerate. In the isomerase reaction, S2AL is rearranged via a Mg-dependent methyl migration to produce 3-hydroxy-3-methyl-2-ketobutyrate (HMKB). In the reductase reaction, this 2-ketoacid undergoes a metal-dependent reduction by NADPH to yield (R)-2,3-dihydroxy-isovalerate. This Colwellia psychrerythraea (strain 34H / ATCC BAA-681) (Vibrio psychroerythus) protein is Ketol-acid reductoisomerase (NADP(+)).